The following is a 328-amino-acid chain: Peroxidase 25 (328 aa).

Residues 1–26 (MGVYLGKYCYIMIIMLVLVLGKEVRS) form the signal peptide. 4 cysteine pairs are disulfide-bonded: Cys-38–Cys-114, Cys-71–Cys-76, Cys-120–Cys-324, and Cys-198–Cys-230. His-69 (proton acceptor) is an active-site residue. 5 residues coordinate Ca(2+): Asp-70, Val-73, Gly-75, Asp-77, and Ser-79. A substrate-binding site is contributed by Pro-161. Residue His-191 coordinates heme b. Thr-192 is a binding site for Ca(2+). An N-linked (GlcNAc...) asparagine glycan is attached at Asn-207. Residues Asp-243, Ser-246, and Asp-251 each contribute to the Ca(2+) site.

Belongs to the peroxidase family. Classical plant (class III) peroxidase subfamily. Requires heme b as cofactor. Ca(2+) serves as cofactor.

The protein resides in the secreted. It catalyses the reaction 2 a phenolic donor + H2O2 = 2 a phenolic radical donor + 2 H2O. Its function is as follows. Removal of H(2)O(2), oxidation of toxic reductants, biosynthesis and degradation of lignin, suberization, auxin catabolism, response to environmental stresses such as wounding, pathogen attack and oxidative stress. These functions might be dependent on each isozyme/isoform in each plant tissue. The sequence is that of Peroxidase 25 (PER25) from Arabidopsis thaliana (Mouse-ear cress).